The primary structure comprises 106 residues: uncharacterized protein (106 aa).

This is an uncharacterized protein from Archaeoglobus fulgidus (strain ATCC 49558 / DSM 4304 / JCM 9628 / NBRC 100126 / VC-16).